Here is a 294-residue protein sequence, read N- to C-terminus: S-adenosylmethionine uptake transporter (294 aa).

Helical transmembrane passes span 8 to 28 (YLTGIGWFLLSLVSSSANDVI), 41 to 61 (VAFFRFFFSSIVLLPFVVYYG), 74 to 91 (ILRGLLLFFGMTSWTYGL), 98 to 118 (TATVVSFSIPLFTLILAVFFL), 121 to 141 (NIIWPRWVVTVVGFIGLVVTL), 148 to 168 (FNPEILYFVLAAISFAMLDII), 177 to 197 (SMISMLFYSAIVTAIVSLPVA), 207 to 227 (FELALLFVLGSSGSLILFFLL), 237 to 257 (ATAPYRYLELVISVIAAYFIF), and 260 to 280 (FPDKSTLHGAVIIIPTTLFII). EamA domains are found at residues 21-141 (SSSA…VVTL) and 160-280 (ISFA…LFII).

Belongs to the drug/metabolite transporter (DMT) superfamily. 10 TMS drug/metabolite exporter (DME) (TC 2.A.7.3) family.

The protein resides in the cell inner membrane. Its function is as follows. Transports S-adenosylmethionine. This is S-adenosylmethionine uptake transporter (sam) from Rickettsia conorii (strain ATCC VR-613 / Malish 7).